The chain runs to 653 residues: Polyadenylate-binding protein, cytoplasmic and nuclear (653 aa).

The segment covering 1-10 (MPSTDLKKQA) has biased composition (basic and acidic residues). Residues 1 to 77 (MPSTDLKKQA…SVATPSGTAP (77 aa)) form a disordered region. The segment covering 17–27 (DVNTNNEAVES) has biased composition (polar residues). Residues 53 to 68 (AAEPSESTSTPTNASS) are compositionally biased toward low complexity. The 79-residue stretch at 80–158 (ASLYVGELDP…RPCRIMWSQR (79 aa)) folds into the RRM 1 domain. Threonine 167 carries the post-translational modification Phosphothreonine. RRM domains follow at residues 168 to 245 (GNVF…HHVS), 261 to 338 (TNVY…RAQK), and 364 to 441 (VNLF…LAQR). A PABC domain is found at 569 to 646 (PERFTAADLA…AIGVLQEFVD (78 aa)).

Belongs to the polyadenylate-binding protein type-1 family. In terms of assembly, interacts with cid13.

Its subcellular location is the cytoplasm. The protein localises to the nucleus. In terms of biological role, binds the poly(A) tail of mRNA. Appears to be an important mediator of the multiple roles of the poly(A) tail in mRNA biogenesis, stability and translation. In the nucleus, involved in both mRNA cleavage and polyadenylation. Is also required for efficient mRNA export to the cytoplasm. Acts in concert with a poly(A)-specific nuclease (PAN) to affect poly(A) tail shortening, which may occur concomitantly with either nucleocytoplasmic mRNA transport or translational initiation. In the cytoplasm, stimulates translation initiation and regulates mRNA decay through translation termination-coupled poly(A) shortening, probably mediated by PAN. The chain is Polyadenylate-binding protein, cytoplasmic and nuclear (pab1) from Schizosaccharomyces pombe (strain 972 / ATCC 24843) (Fission yeast).